We begin with the raw amino-acid sequence, 142 residues long: Secreted acidic protein 1B (142 aa).

2 stretches are compositionally biased toward acidic residues: residues 1-47 (SDDE…DDNE) and 54-64 (TNDDVDYGDGN). The interval 1–74 (SDDESGDDEN…DEAREIGDHS (74 aa)) is disordered. Residues 1 to 123 (SDDESGDDEN…YLRSGGSHFK (123 aa)) lie on the Extracellular side of the membrane. Over residues 65–74 (DEAREIGDHS) the composition is skewed to basic and acidic residues. The chain crosses the membrane as a helical span at residues 124–141 (GQLLNITLGLGFCILFLL). A topological domain (cytoplasmic) is located at residue leucine 142.

As to expression, component of the acid-insoluble and acid-soluble organic matrix of the aragonitic skeleton (at protein level).

It localises to the membrane. The chain is Secreted acidic protein 1B from Acropora millepora (Staghorn coral).